A 354-amino-acid polypeptide reads, in one-letter code: Small ribosomal subunit biogenesis GTPase RsgA (354 aa).

Residues 1-46 (MSKKKPLSQGQLRRMRANHEKRLNRDSGDKNTPELQDSSLGPEQSG) form a disordered region. Over residues 17–32 (ANHEKRLNRDSGDKNT) the composition is skewed to basic and acidic residues. The span at 33–46 (PELQDSSLGPEQSG) shows a compositional bias: polar residues. Positions 108–276 (HSSLSRPDLY…LIDSPGVREF (169 aa)) constitute a CP-type G domain. GTP contacts are provided by residues 164–167 (NKID) and 218–226 (GQSGVGKSS). Residues Cys-300, Cys-305, His-307, and Cys-313 each contribute to the Zn(2+) site.

Belongs to the TRAFAC class YlqF/YawG GTPase family. RsgA subfamily. As to quaternary structure, monomer. Associates with 30S ribosomal subunit, binds 16S rRNA. Zn(2+) is required as a cofactor.

It is found in the cytoplasm. In terms of biological role, one of several proteins that assist in the late maturation steps of the functional core of the 30S ribosomal subunit. Helps release RbfA from mature subunits. May play a role in the assembly of ribosomal proteins into the subunit. Circularly permuted GTPase that catalyzes slow GTP hydrolysis, GTPase activity is stimulated by the 30S ribosomal subunit. This is Small ribosomal subunit biogenesis GTPase RsgA from Shewanella oneidensis (strain ATCC 700550 / JCM 31522 / CIP 106686 / LMG 19005 / NCIMB 14063 / MR-1).